A 263-amino-acid polypeptide reads, in one-letter code: ATP synthase subunit b 2 (263 aa).

A helical transmembrane segment spans residues 2 to 22 (LIDPLTVVAQIINFLILVALL).

Belongs to the ATPase B chain family. As to quaternary structure, F-type ATPases have 2 components, F(1) - the catalytic core - and F(0) - the membrane proton channel. F(1) has five subunits: alpha(3), beta(3), gamma(1), delta(1), epsilon(1). F(0) has four main subunits: a(1), b(1), b'(1) and c(10-14). The alpha and beta chains form an alternating ring which encloses part of the gamma chain. F(1) is attached to F(0) by a central stalk formed by the gamma and epsilon chains, while a peripheral stalk is formed by the delta, b and b' chains.

The protein resides in the cellular thylakoid membrane. Functionally, f(1)F(0) ATP synthase produces ATP from ADP in the presence of a proton or sodium gradient. F-type ATPases consist of two structural domains, F(1) containing the extramembraneous catalytic core and F(0) containing the membrane proton channel, linked together by a central stalk and a peripheral stalk. During catalysis, ATP synthesis in the catalytic domain of F(1) is coupled via a rotary mechanism of the central stalk subunits to proton translocation. In terms of biological role, component of the F(0) channel, it forms part of the peripheral stalk, linking F(1) to F(0). This Acaryochloris marina (strain MBIC 11017) protein is ATP synthase subunit b 2.